We begin with the raw amino-acid sequence, 610 residues long: UvrABC system protein C (610 aa).

The region spanning 16–94 (SQPGVYRMYD…IKLYQPRYNV (79 aa)) is the GIY-YIG domain. In terms of domain architecture, UVR spans 204 to 239 (QQVLTRLIERMEQASQQLKFEDAARYRDQIQAVRQV).

It belongs to the UvrC family. As to quaternary structure, interacts with UvrB in an incision complex.

The protein localises to the cytoplasm. The UvrABC repair system catalyzes the recognition and processing of DNA lesions. UvrC both incises the 5' and 3' sides of the lesion. The N-terminal half is responsible for the 3' incision and the C-terminal half is responsible for the 5' incision. The polypeptide is UvrABC system protein C (Photorhabdus laumondii subsp. laumondii (strain DSM 15139 / CIP 105565 / TT01) (Photorhabdus luminescens subsp. laumondii)).